We begin with the raw amino-acid sequence, 507 residues long: ESX-5 secretion system ATPase EccB5 (507 aa).

Residues 56-76 traverse the membrane as a helical segment; the sequence is VVASVSAALVICLGSLLWSFI.

Belongs to the EccB family. In terms of assembly, part of the ESX-5 / type VII secretion system (T7SS), which is composed of cytosolic and membrane components. The ESX-5 membrane complex is composed of EccB5, EccC5, EccD5 and EccE5.

It is found in the cell inner membrane. Its function is as follows. An ATPase. Part of the ESX-5 specialized secretion system, which is responsible for the secretion of EsxN and a number of PE_PGRS and PPE proteins. The chain is ESX-5 secretion system ATPase EccB5 from Mycobacterium marinum (strain ATCC BAA-535 / M).